The following is a 2431-amino-acid chain: Nucleoprotein TPR (2431 aa).

Positions 1–48 (MTSGGSASRSGHRGVPMTSRGFDGSRRGSLRRAGARETASEAADGAAP) are disordered. The sufficient for interaction with TPR stretch occupies residues 77–87 (AVLQQVLERPE). The necessary for interaction with HSF1 stretch occupies residues 88–191 (LNKLPKSTQN…GIQSQFTRAK (104 aa)). Residues 98-444 (KLEKFLAEQQ…SATKRKGAIL (347 aa)) adopt a coiled-coil conformation. An N6-acetyllysine mark is found at Lys-326, Lys-386, and Lys-419. Ser-453 is modified (phosphoserine). A coiled-coil region spans residues 486 to 678 (EKQENKRINK…ESRQHQMQLV (193 aa)). N6-acetyllysine occurs at positions 502, 531, and 551. Residues 511-587 (LKRQREEYER…LMELEEARGN (77 aa)) are necessary for association to the NPC. Residues Ser-596, Ser-597, and Ser-706 each carry the phosphoserine modification. A coiled-coil region spans residues 736-1246 (STEAIEAKAA…IEKLSDKVVT (511 aa)). Residues Lys-787, Lys-797, Lys-822, and Lys-829 each carry the N6-acetyllysine modification. Positions 989 to 998 (LASQSTQRTG) are enriched in polar residues. Residues 989-1011 (LASQSTQRTGKGQPGDRDDVDDL) are disordered. The segment covering 1002–1011 (PGDRDDVDDL) has biased composition (basic and acidic residues). Phosphoserine is present on Ser-1259. Coiled coils occupy residues 1289–1494 (EVAQ…LDAK) and 1547–1700 (VQEM…QRDE). Residues 1292 to 1394 (QVESLRYRQR…NAELSEKSGM (103 aa)) are necessary for interaction with HSF1. A compositionally biased stretch (basic and acidic residues) spans 1689-1701 (EHQERHLEQRDEP). Residues 1689–1744 (EHQERHLEQRDEPQEPTNKAPEQQRQITLKTTPASGERGIASTSDPPTANIKPTPV) form a disordered region. Positions 1703-1722 (EPTNKAPEQQRQITLKTTPA) are enriched in polar residues. Lys-1760 carries the N6-acetyllysine modification. A Phosphothreonine modification is found at Thr-1762. Over residues 1873–1898 (SSPVERPSTSTAVFGTVSATPSSSLP) the composition is skewed to polar residues. Residues 1873 to 2193 (SSPVERPSTS…TPGIGGMQQH (321 aa)) are disordered. Residues 1882 to 1937 (STAVFGTVSATPSSSLPKRTREEEEDSTMEAGDQVSEDTVEMPLPKKLKMVTPVGT) are sufficient and essential for mediating its nuclear import. The span at 1937–1951 (TEEEVMAEESTDGEA) shows a compositional bias: acidic residues. Residues 1954–1963 (QAYNQDSQDS) are compositionally biased toward polar residues. A Phosphoserine modification is found at Ser-1963. Residues 1994–2005 (QSDQQTTSSQDG) are compositionally biased toward low complexity. Composition is skewed to acidic residues over residues 2016 to 2057 (DSDD…EDSN) and 2067 to 2088 (DGYE…ETEE). Residues 2100 to 2132 (ADSQNSGEGNTSAAESSFSQEVAREQQPTSASE) show a composition bias toward polar residues. Residues Ser-2102, Ser-2105, Ser-2116, Ser-2118, and Ser-2141 each carry the phosphoserine modification. Arg-2174 and Arg-2179 each carry omega-N-methylarginine. A phosphothreonine mark is found at Thr-2184 and Thr-2205. Ser-2223 carries the post-translational modification Phosphoserine. Arg-2231 carries the omega-N-methylarginine modification. The span at 2295 to 2312 (ESTTSDASEHASQSVPMV) shows a compositional bias: polar residues. The segment at 2295-2431 (ESTTSDASEH…RGGINRGNIN (137 aa)) is disordered. Residues 2313-2325 (TTSTGTLSTTNET) are compositionally biased toward low complexity. Residues 2327–2340 (AGDDGDEVFVEAES) show a composition bias toward acidic residues. The segment covering 2341-2351 (EGISSEAGLEI) has biased composition (low complexity). Residues 2353 to 2367 (SQQEEEPVQASDESD) show a composition bias toward acidic residues. Low complexity predominate over residues 2368–2388 (LPSTSQDPPSSSSVDTSSSQP). Arg-2411, Arg-2413, and Arg-2422 each carry asymmetric dimethylarginine. Residues 2420 to 2431 (GGRGGINRGNIN) show a composition bias toward gly residues.

It belongs to the TPR family. As to quaternary structure, homodimer. Part of the nuclear pore complex (NPC). Associates with the XPO1/CRM1-mediated nuclear export complex, the Importin alpha/Importin beta receptor and the dynein 1 complex. Interacts (via C-terminal domain) with the KPNB1; the interaction occurs in a RanGTP-dependent manner. Interacts (via C-terminal region and phosphorylated form) with MAPK1/ERK2 (via phosphorylated form); the interaction requires dimerization of MAPK1/ERK2 and increases following EGF stimulation. Interacts with MAPK3/ERK1; the interaction increases following EGF stimulation. Interacts (via coiled coil region) with NUP153; the interaction is direct. Interacts with HSF1; the interaction increases in a stress-responsive manner and stimulates export of stress-induced HSP70 mRNA. Interacts with huntingtin/HTT; the interaction is inhibited by aggregated huntingtin/HTT forms with expanded polyglutamine stretch. Interacts with MAD1L1 (via N-terminal region), MAD2L1, and TTK; the interactions occurs in a microtubule-independent manner. Interacts (via middle region) with DYNLL1. Interacts with DCTN1, dynein, NUP153 and tubulin. Interacts with MTA1. Interacts with IFI204 (via C-terminal region). Interacts with IFI203. Interacts with ZC3HC1; this interaction mediates ZC3HC1 nuclear envelopes (NE)-association but also required for proper positioning of a substantial amount of TPR at the nuclear basket (NB). In terms of processing, phosphorylated. Phosphorylation occurs on serine and threonine residues (comprised in the C-terminal region) by MAPK1/ERK2 and stabilizes the interaction between these two proteins. As to expression, expressed in the heart, liver, kidney, spleen, lung and skeletal muscles.

The protein resides in the nucleus. It is found in the nucleus membrane. Its subcellular location is the nucleus envelope. It localises to the nuclear pore complex. The protein localises to the cytoplasm. The protein resides in the cytoskeleton. It is found in the spindle. Its subcellular location is the chromosome. It localises to the centromere. The protein localises to the kinetochore. Its function is as follows. Component of the nuclear pore complex (NPC), a complex required for the trafficking across the nuclear envelope. Functions as a scaffolding element in the nuclear phase of the NPC essential for normal nucleocytoplasmic transport of proteins and mRNAs, plays a role in the establishment of nuclear-peripheral chromatin compartmentalization in interphase, and in the mitotic spindle checkpoint signaling during mitosis. Involved in the quality control and retention of unspliced mRNAs in the nucleus; in association with NUP153, regulates the nuclear export of unspliced mRNA species bearing constitutive transport element (CTE) in a NXF1- and KHDRBS1-independent manner. Negatively regulates both the association of CTE-containing mRNA with large polyribosomes and translation initiation. Does not play any role in Rev response element (RRE)-mediated export of unspliced mRNAs. Implicated in nuclear export of mRNAs transcribed from heat shock gene promoters; associates both with chromatin in the HSP70 promoter and with mRNAs transcribed from this promoter under stress-induced conditions. Plays a limited role in the regulation of nuclear protein export. Modulates the nucleocytoplasmic transport of activated MAPK1/ERK2 and huntingtin/HTT and may serve as a docking site for the XPO1/CRM1-mediated nuclear export complex. Also plays a role as a structural and functional element of the perinuclear chromatin distribution; involved in the formation and/or maintenance of NPC-associated perinuclear heterochromatin exclusion zones (HEZs). Finally, acts as a spatial regulator of the spindle-assembly checkpoint (SAC) response ensuring a timely and effective recruitment of spindle checkpoint proteins like MAD1L1 and MAD2L1 to unattached kinetochore during the metaphase-anaphase transition before chromosome congression. Its N-terminus is involved in activation of oncogenic kinases. This Mus musculus (Mouse) protein is Nucleoprotein TPR.